Here is a 338-residue protein sequence, read N- to C-terminus: Elongation factor Ts, mitochondrial (338 aa).

The N-terminal 55 residues, 1–55, are a transit peptide targeting the mitochondrion; sequence MSLLRSLRLCLVARTGSCPLSALGPGPLLPSLQAGLPLLQSPQQWHTFHSGSWLS. N6-succinyllysine is present on residues lysine 89, lysine 146, and lysine 205. Serine 283 carries the phosphoserine modification.

It belongs to the EF-Ts family.

The protein resides in the mitochondrion. In terms of biological role, associates with the EF-Tu.GDP complex and induces the exchange of GDP to GTP. It remains bound to the aminoacyl-tRNA.EF-Tu.GTP complex up to the GTP hydrolysis stage on the ribosome. The chain is Elongation factor Ts, mitochondrial from Bos taurus (Bovine).